We begin with the raw amino-acid sequence, 296 residues long: uncharacterized protein (296 aa).

6 helical membrane-spanning segments follow: residues 1 to 21, 30 to 50, 71 to 91, 92 to 112, 113 to 133, and 142 to 162; these read MVNLLFLFFIMSFFPNNIFDY, LITASLKILFALAILLIGFWL, FISFAGNISYYLLLVVFFVLC, LAQLGIQTSSLVALLGASTLA, IGLALQGSLANVAGGILLVLF, and IEVAGIEGIVESIEILSTTIC.

This sequence belongs to the MscS (TC 1.A.23) family.

It is found in the cell membrane. This is an uncharacterized protein from Synechocystis sp. (strain ATCC 27184 / PCC 6803 / Kazusa).